Here is a 618-residue protein sequence, read N- to C-terminus: Beta-xylosidase (618 aa).

Disordered regions lie at residues 76–100 (ERDRYTTDESDSGSSERHSVQQEES) and 463–509 (LEPQ…PPIQ).

The protein belongs to the glycosyl hydrolase 52 family.

It is found in the secreted. It catalyses the reaction Hydrolysis of (1-&gt;4)-beta-D-xylans, to remove successive D-xylose residues from the non-reducing termini.. It functions in the pathway glycan degradation; xylan degradation. This is Beta-xylosidase (xylA) from Geobacillus stearothermophilus (Bacillus stearothermophilus).